We begin with the raw amino-acid sequence, 513 residues long: MAAAAFGQLNLEEPPPIWGSRSVDCFEKLEQIGEGTYGQVYMAKEIKTGEIVALKKIRMDNEREGFPITAIREIKILKKLHHENVIHLKEIVTSPGRDRDDQGKPDNNKYKGGIYMVFEYMDHDLTGLADRPGLRFTVPQIKCYMKQLLTGLHYCHVNQVLHRDIKGSNLLIDNEGNLKLADFGLARSYSHDHTGNLTNRVITLWYRPPELLLGATKYGPAIDMWSVGCIFAELLNGKPILPGKTENEQLNKIYELCGSPDESNWPGVSKMPWYNQMKSSRPLKRRVREIYRHFDRHALELLEKMLVLDPSQRICAKDALDAEYFWTDPLPCDPKSLPTYESSHEFQTKKKRQQMRHNEEAAKKQKLQHPQQQHSRLPPQQHGVGQSHAAPLWPAGPNHPMNNNAPPPQIPAGGHYYGGKPRGGAPVPNRYPPSGNQTGGYNNQSRGGYSSGAYPPQGRGAPYGAGPRGPSGGYGVGPPNYSQGGGQYGGSGGSGRGQNPMGGARNQQYGWQP.

Residues 26–325 (FEKLEQIGEG…AKDALDAEYF (300 aa)) enclose the Protein kinase domain. ATP is bound by residues 32–40 (IGEGTYGQV) and lysine 55. Position 37 is a phosphotyrosine (tyrosine 37). Aspartate 164 acts as the Proton acceptor in catalysis. Phosphothreonine is present on threonine 198. The segment at 337–513 (LPTYESSHEF…ARNQQYGWQP (177 aa)) is disordered. Residues 395 to 404 (AGPNHPMNNN) show a composition bias toward low complexity. Polar residues predominate over residues 434 to 448 (SGNQTGGYNNQSRGG). Gly residues-rich tracts occupy residues 461–476 (APYG…GYGV) and 483–496 (QGGG…GSGR).

It belongs to the protein kinase superfamily. CMGC Ser/Thr protein kinase family. CDC2/CDKX subfamily. In terms of assembly, interacts with CYCT1-3. As to expression, highly expressed in flowers. Expressed in seedlings, roots, rosettes and stems.

The catalysed reaction is L-seryl-[protein] + ATP = O-phospho-L-seryl-[protein] + ADP + H(+). It carries out the reaction L-threonyl-[protein] + ATP = O-phospho-L-threonyl-[protein] + ADP + H(+). The enzyme catalyses [DNA-directed RNA polymerase] + ATP = phospho-[DNA-directed RNA polymerase] + ADP + H(+). The chain is Cyclin-dependent kinase C-2 (CDKC-2) from Arabidopsis thaliana (Mouse-ear cress).